Reading from the N-terminus, the 691-residue chain is POU domain, class 6, transcription factor 2 (691 aa).

3 disordered regions span residues 1-61, 188-297, and 435-461; these read MIAG…RGNT, QQQQ…LQLV, and GQAA…SALS. Basic and acidic residues predominate over residues 17 to 28; that stretch reads MNAELRGEDKAA. Low complexity-rich tracts occupy residues 188–197 and 206–216; these read QQQQQQQQQQ and QHPQPASQAPP. Over residues 217–237 the composition is skewed to pro residues; sequence QSQPTPPHQPPPASQQLPAPP. Over residues 238–272 the composition is skewed to low complexity; the sequence is AQLEQATQPQQHQPHSHPQNQTQNQPSPTQQSSSP. Polar residues predominate over residues 437 to 447; sequence AATSHSPVRQA. Over residues 448–458 the composition is skewed to low complexity; the sequence is SSSSSSSSSSS. The POU-specific domain occupies 476 to 586; that stretch reads VDGVNLEEIR…VLERWMAEAE (111 aa). The homeobox DNA-binding region spans 607-666; the sequence is KRKRRTSFTPQALEILNAHFEKNTHPSGQEMTEIAEKLNYDREVVRVWFCNKRQALKNTI. The disordered stretch occupies residues 670–691; it reads KQHEPTSAAPLEPLADSPEENC.

Belongs to the POU transcription factor family. Class-6 subfamily. Expressed in kidney, heart, muscle, spleen and ovary, but not in lung.

The protein localises to the nucleus. Its function is as follows. Probable transcription factor likely to be involved in early steps in the differentiation of amacrine and ganglion cells. Recognizes and binds to the DNA sequence 5'-ATGCAAAT-3'. This chain is POU domain, class 6, transcription factor 2 (Pou6f2), found in Mus musculus (Mouse).